A 79-amino-acid polypeptide reads, in one-letter code: Small ribosomal subunit protein uS17 (79 aa).

Belongs to the universal ribosomal protein uS17 family. In terms of assembly, part of the 30S ribosomal subunit.

In terms of biological role, one of the primary rRNA binding proteins, it binds specifically to the 5'-end of 16S ribosomal RNA. The chain is Small ribosomal subunit protein uS17 from Rhizobium leguminosarum bv. trifolii (strain WSM2304).